A 263-amino-acid chain; its full sequence is Polyamine aminopropyltransferase (263 aa).

A PABS domain is found at 1-221; sequence MARHPYRRLR…AVMAFQSSPK (221 aa). S-methyl-5'-thioadenosine contacts are provided by residues Asp-98 and 126-127; that span reads DG. Asp-144 acts as the Proton acceptor in catalysis.

Belongs to the spermidine/spermine synthase family. In terms of assembly, homodimer or homotetramer.

Its subcellular location is the cytoplasm. The catalysed reaction is S-adenosyl 3-(methylsulfanyl)propylamine + putrescine = S-methyl-5'-thioadenosine + spermidine + H(+). The protein operates within amine and polyamine biosynthesis; spermidine biosynthesis; spermidine from putrescine: step 1/1. Catalyzes the irreversible transfer of a propylamine group from the amino donor S-adenosylmethioninamine (decarboxy-AdoMet) to putrescine (1,4-diaminobutane) to yield spermidine. The protein is Polyamine aminopropyltransferase of Neisseria meningitidis serogroup A / serotype 4A (strain DSM 15465 / Z2491).